The chain runs to 758 residues: Amyloid beta precursor protein binding family B member 2 (758 aa).

S123 carries the phosphoserine modification. The disordered stretch occupies residues 134–154 (KLEGKEPHPQDSSSCEILPSQ). Phosphoserine is present on S160. The segment covering 176–190 (EQNRGNHHGTAEEKS) has biased composition (basic and acidic residues). Disordered stretches follow at residues 176–195 (EQNRGNHHGTAEEKSQPVQG), 206–295 (LLLQ…LPPG), and 326–351 (DLQGSRKGSLSSVTPSPTPENEKQPW). 2 stretches are compositionally biased toward polar residues: residues 212–230 (NRPQSSPEDGQVATVSSSP) and 261–275 (SWTTLSQDSASPSSP). The region spanning 290-322 (PDLPPGWKRVSDIAGTYYWHIPTGTTQWERPVS) is the WW domain. A compositionally biased stretch (polar residues) spans 331–340 (RKGSLSSVTP). S334, S409, and S412 each carry phosphoserine. PID domains are found at residues 413–578 (DPEA…LQVD) and 584–736 (TELV…VTTN).

In terms of assembly, interacts (via C-terminus) with APP (via C-terminus). Interacts with APLP2 (via cytoplasmic domain). In terms of tissue distribution, widely expressed.

The protein resides in the endoplasmic reticulum. It is found in the golgi apparatus. Its subcellular location is the early endosome. Functionally, plays a role in the maintenance of lens transparency, and may also play a role in muscle cell strength. Involved in hippocampal neurite branching and neuromuscular junction formation, as a result plays a role in spatial memory functioning. Activates transcription of APP. In Homo sapiens (Human), this protein is Amyloid beta precursor protein binding family B member 2.